Consider the following 84-residue polypeptide: MSILSFLLGEKKKSASIAKERLQLIIAHERVGGKAPADYLPALQRELVAVISKYVKISDDDIRVNLERHDDLEVLEVKIEIPQV.

It belongs to the MinE family.

Prevents the cell division inhibition by proteins MinC and MinD at internal division sites while permitting inhibition at polar sites. This ensures cell division at the proper site by restricting the formation of a division septum at the midpoint of the long axis of the cell. This Paraburkholderia phymatum (strain DSM 17167 / CIP 108236 / LMG 21445 / STM815) (Burkholderia phymatum) protein is Cell division topological specificity factor.